Consider the following 479-residue polypeptide: Zinc finger and SCAN domain-containing protein 26 (479 aa).

A Glycyl lysine isopeptide (Lys-Gly) (interchain with G-Cter in SUMO2) cross-link involves residue Lys17. The 83-residue stretch at 51–133 (CKRFRQLRYE…VFLEDLQLEL (83 aa)) folds into the SCAN box domain. Positions 155 to 187 (TAPGKATPERQVQPEGDVPQPEREKGEAKRIEN) are disordered. Positions 174 to 187 (QPEREKGEAKRIEN) are enriched in basic and acidic residues. The C2H2-type 1; degenerate zinc finger occupies 232 to 254 (CKCSEYGQAFFQHSDLIKHESSH). 7 consecutive C2H2-type zinc fingers follow at residues 283-305 (HQCH…QKIH), 311-333 (YQCK…LRIH), 339-361 (YLCI…QRIH), 367-389 (CQCK…QRIH), 395-417 (HQCN…HRIH), 423-445 (FKCT…VRIH), and 451-473 (YKCN…QRYH).

The protein localises to the nucleus. Its function is as follows. May be involved in transcriptional regulation. This is Zinc finger and SCAN domain-containing protein 26 (ZSCAN26) from Bos taurus (Bovine).